The following is a 566-amino-acid chain: NXPE family member 3 (566 aa).

The signal sequence occupies residues 1 to 32 (MEKYFPKYVPFFSLLALSGLLYLLWSITSLES). N-linked (GlcNAc...) asparagine glycosylation is found at Asn64, Asn172, Asn242, Asn303, and Asn344.

It belongs to the NXPE family.

It is found in the secreted. This Danio rerio (Zebrafish) protein is NXPE family member 3 (nxpe3).